We begin with the raw amino-acid sequence, 417 residues long: Lissencephaly-1 homolog (417 aa).

The region spanning 7–39 is the LisH domain; that stretch reads QKEELNRAIADYLFANGYVKALNAFREESQLAG. A coiled-coil region spans residues 54-86; that stretch reads TSVIRLQKKVMDLEAKLNEAEKEFQSMQNAIGF. WD repeat units lie at residues 120-159, 162-203, 204-243, 246-285, 288-340, 343-382, and 385-417; these read GHRS…FEHT, GHTD…KTLT, GHDH…CTKT, GHTE…CQVV, GHEH…CLFV, GHDN…CHKT, and AHSH…WDCR.

This sequence belongs to the WD repeat LIS1/nudF family.

Its subcellular location is the cytoplasm. The protein localises to the cytoskeleton. It is found in the microtubule organizing center. The protein resides in the centrosome. In terms of biological role, positively regulates the activity of the minus-end directed microtubule motor protein dynein. May enhance dynein-mediated microtubule sliding by targeting dynein to the microtubule plus end. Required for several dynein- and microtubule-dependent processes. The chain is Lissencephaly-1 homolog from Schistosoma mansoni (Blood fluke).